A 407-amino-acid polypeptide reads, in one-letter code: S-adenosylmethionine synthase (407 aa).

Histidine 15 provides a ligand contact to ATP. Aspartate 17 is a Mg(2+) binding site. Glutamate 43 contributes to the K(+) binding site. L-methionine-binding residues include glutamate 56 and glutamine 99. The interval 99–109 (QSPDIARGVDT) is flexible loop. A disordered region spans residues 112–131 (ERRGGGTAPGGPGDELDRQG). ATP is bound by residues 179 to 181 (DGK), 252 to 253 (RF), aspartate 261, 267 to 268 (RK), alanine 284, and lysine 288. Aspartate 261 serves as a coordination point for L-methionine. Position 292 (lysine 292) interacts with L-methionine.

This sequence belongs to the AdoMet synthase family. In terms of assembly, homotetramer; dimer of dimers. Mg(2+) is required as a cofactor. The cofactor is K(+).

The protein resides in the cytoplasm. The enzyme catalyses L-methionine + ATP + H2O = S-adenosyl-L-methionine + phosphate + diphosphate. It functions in the pathway amino-acid biosynthesis; S-adenosyl-L-methionine biosynthesis; S-adenosyl-L-methionine from L-methionine: step 1/1. In terms of biological role, catalyzes the formation of S-adenosylmethionine (AdoMet) from methionine and ATP. The overall synthetic reaction is composed of two sequential steps, AdoMet formation and the subsequent tripolyphosphate hydrolysis which occurs prior to release of AdoMet from the enzyme. The polypeptide is S-adenosylmethionine synthase (Streptomyces fradiae (Streptomyces roseoflavus)).